The sequence spans 426 residues: Serine/threonine-protein kinase ssn3 (426 aa).

Residues 39–368 (YHIVGFISSG…AKEALEHPYF (330 aa)) form the Protein kinase domain. ATP-binding positions include 45–53 (ISSGTYGRV) and K69. The active-site Proton acceptor is D171. A compositionally biased stretch (basic and acidic residues) spans 389-398 (RRITHDDNDI). The disordered stretch occupies residues 389-426 (RRITHDDNDIRSGSLPGTKRSGLPDDSLMSRAAKRMKE).

Belongs to the protein kinase superfamily. CMGC Ser/Thr protein kinase family. CDC2/CDKX subfamily. Component of the srb8-11 complex, a regulatory module of the Mediator complex. Mg(2+) is required as a cofactor.

Its subcellular location is the nucleus. It catalyses the reaction L-seryl-[protein] + ATP = O-phospho-L-seryl-[protein] + ADP + H(+). The enzyme catalyses L-threonyl-[protein] + ATP = O-phospho-L-threonyl-[protein] + ADP + H(+). It carries out the reaction [DNA-directed RNA polymerase] + ATP = phospho-[DNA-directed RNA polymerase] + ADP + H(+). Functionally, component of the srb8-11 complex. The srb8-11 complex is a regulatory module of the Mediator complex which is itself involved in regulation of basal and activated RNA polymerase II-dependent transcription. The srb8-11 complex may be involved in the transcriptional repression of a subset of genes regulated by Mediator. It may inhibit the association of the Mediator complex with RNA polymerase II to form the holoenzyme complex. The srb8-11 complex phosphorylates the C-terminal domain (CTD) of the largest subunit of RNA polymerase II. The chain is Serine/threonine-protein kinase ssn3 (ssn3) from Emericella nidulans (strain FGSC A4 / ATCC 38163 / CBS 112.46 / NRRL 194 / M139) (Aspergillus nidulans).